Consider the following 260-residue polypeptide: Circadian clock-controlled protein daywake (260 aa).

Positions 1 to 25 (MQLTSASVCLLWMGLLSWVSHRIDA) are cleaved as a signal peptide.

The protein belongs to the TO family.

In terms of biological role, component of the circadian clock or downstream effector of clock function. Required for suppressing daytime sleep (siesta) under ambient environmental temperatures. Part of a heat avoidance mechanism that modulates daytime sleep behavior under different environmental temperatures to minimize the risk of heat exposure. Under cooler ambient temperatures, suppresses daytime sleep (siesta) and thus allows for longer periods of daytime activity. The protein is Circadian clock-controlled protein daywake of Drosophila yakuba (Fruit fly).